Here is a 95-residue protein sequence, read N- to C-terminus: Osteocalcin-related protein (95 aa).

Positions 1-23 (MRTLSLLTLLALAALCLSDLTDA) are cleaved as a signal peptide. A propeptide spanning residues 24 to 49 (TPTGPESDKAFMSKQEGNKVVNRLRR) is cleaved from the precursor. The region spanning 46-92 (RLRRYLGASVPSPDPLEPTRELCELDPACDELSNQYGLKTAYRRIYG) is the Gla domain. Glu-62, Glu-66, Glu-69, and Asp-75 together coordinate Ca(2+). Residues Glu-66 and Glu-69 each carry the 4-carboxyglutamate modification. Residues Cys-68 and Cys-74 are joined by a disulfide bond.

This sequence belongs to the osteocalcin/matrix Gla protein family. In terms of processing, gamma-carboxyglutamic acid residues are formed by vitamin K dependent carboxylation. These residues are essential for the binding of calcium. In terms of tissue distribution, expressed in kidney and lung, but not in bone.

The protein resides in the secreted. Its function is as follows. Binds strongly to apatite and calcium. This Mus musculus (Mouse) protein is Osteocalcin-related protein.